The following is a 565-amino-acid chain: Proline--tRNA ligase (565 aa).

The protein belongs to the class-II aminoacyl-tRNA synthetase family. ProS type 1 subfamily. Homodimer.

The protein resides in the cytoplasm. It carries out the reaction tRNA(Pro) + L-proline + ATP = L-prolyl-tRNA(Pro) + AMP + diphosphate. In terms of biological role, catalyzes the attachment of proline to tRNA(Pro) in a two-step reaction: proline is first activated by ATP to form Pro-AMP and then transferred to the acceptor end of tRNA(Pro). As ProRS can inadvertently accommodate and process non-cognate amino acids such as alanine and cysteine, to avoid such errors it has two additional distinct editing activities against alanine. One activity is designated as 'pretransfer' editing and involves the tRNA(Pro)-independent hydrolysis of activated Ala-AMP. The other activity is designated 'posttransfer' editing and involves deacylation of mischarged Ala-tRNA(Pro). The misacylated Cys-tRNA(Pro) is not edited by ProRS. In Lactobacillus delbrueckii subsp. bulgaricus (strain ATCC 11842 / DSM 20081 / BCRC 10696 / JCM 1002 / NBRC 13953 / NCIMB 11778 / NCTC 12712 / WDCM 00102 / Lb 14), this protein is Proline--tRNA ligase.